A 203-amino-acid polypeptide reads, in one-letter code: Large ribosomal subunit protein uL18 (203 aa).

Belongs to the universal ribosomal protein uL18 family. As to quaternary structure, part of the 50S ribosomal subunit. Contacts the 5S and 23S rRNAs.

In terms of biological role, this is one of the proteins that bind and probably mediate the attachment of the 5S RNA into the large ribosomal subunit, where it forms part of the central protuberance. The polypeptide is Large ribosomal subunit protein uL18 (Pyrococcus furiosus (strain ATCC 43587 / DSM 3638 / JCM 8422 / Vc1)).